A 144-amino-acid chain; its full sequence is Large ribosomal subunit protein uL13 (144 aa).

It belongs to the universal ribosomal protein uL13 family. Part of the 50S ribosomal subunit.

This protein is one of the early assembly proteins of the 50S ribosomal subunit, although it is not seen to bind rRNA by itself. It is important during the early stages of 50S assembly. In Legionella pneumophila (strain Paris), this protein is Large ribosomal subunit protein uL13.